Consider the following 405-residue polypeptide: CMP-sialic acid transporter 4 (405 aa).

Over 1 to 43 (MQRNGVMECSVCHSKVVAPSPRSVSRAYDKHRSKISSKYRALN) the chain is Cytoplasmic. A helical membrane pass occupies residues 44-64 (FLLVSGDCILVGLQPILVFMS). Topologically, residues 65–74 (KVDGKFQFSP) are lumenal. The helical transmembrane segment at 75 to 95 (ISVNFLTEVTKVIFAIVMLII) threads the bilayer. The Cytoplasmic segment spans residues 96–121 (QSRKQKVGEKPLLSLSTFVQAARNNA). A helical transmembrane segment spans residues 122–142 (LLAVPALLYAINNYLKFIMQL). Residue tyrosine 143 is a topological domain, lumenal. The helical transmembrane segment at 144–164 (FSPATVKMLSNLKVLVIAILL) threads the bilayer. Over 165-171 (KFIMRRK) the chain is Cytoplasmic. A helical membrane pass occupies residues 172-192 (FSIIQWEALALLLIGISVNQL). Topologically, residues 193–203 (SSIPDGTKSFG) are lumenal. Residues 204-224 (LAVTTIAYIYTLIFVTVPSLA) form a helical membrane-spanning segment. At 225–244 (SVYNEYALKSQFDTSIYLQN) the chain is on the cytoplasmic side. The helical transmembrane segment at 245–265 (LFLYGYGAIFNFLGILGTVIF) threads the bilayer. The Lumenal portion of the chain corresponds to 266 to 281 (QGPESFDILRGHSRAT). Residues 282-302 (MFLICNNAAQGILSSFFFKYA) form a helical membrane-spanning segment. The Cytoplasmic portion of the chain corresponds to 303–322 (DTILKKYSSTVATIFTGLAS). A helical membrane pass occupies residues 323-343 (AAFLGHTLTVNFLLGISIVFI). Residues 344–405 (SMHQFFSPLA…TDERKPLLPI (62 aa)) lie on the Lumenal side of the membrane.

The protein belongs to the nucleotide-sugar transporter family. CMP-Sialate:CMP antiporter (TC 2.A.7.12) subfamily.

The protein localises to the golgi apparatus membrane. Sugar transporter involved in the transport of CMP-sialic acid from the cytoplasm into the Golgi. May transport important nucleotide sugars such as CMP-Kdo (2-keto-3-deoxy-D-manno-octulosonic acid) in physiological conditions. This chain is CMP-sialic acid transporter 4, found in Oryza sativa subsp. japonica (Rice).